Here is a 328-residue protein sequence, read N- to C-terminus: Ribosomal RNA large subunit methyltransferase F (328 aa).

The interval 1 to 38 (MTDTPKPPRKKPQRPAKPAAPREKATLHPRNRHQGHYD) is disordered.

Belongs to the methyltransferase superfamily. METTL16/RlmF family.

It localises to the cytoplasm. The catalysed reaction is adenosine(1618) in 23S rRNA + S-adenosyl-L-methionine = N(6)-methyladenosine(1618) in 23S rRNA + S-adenosyl-L-homocysteine + H(+). Specifically methylates the adenine in position 1618 of 23S rRNA. The protein is Ribosomal RNA large subunit methyltransferase F of Pseudomonas syringae pv. tomato (strain ATCC BAA-871 / DC3000).